The sequence spans 166 residues: RNA pyrophosphohydrolase (166 aa).

The Nudix hydrolase domain maps to 6–149; that stretch reads GFRPNVGIIL…KRDVYRKAMM (144 aa). The Nudix box motif lies at 38 to 59; that stretch reads GGIHFGETPEQALYRELREEVG.

It belongs to the Nudix hydrolase family. RppH subfamily. The cofactor is a divalent metal cation.

Accelerates the degradation of transcripts by removing pyrophosphate from the 5'-end of triphosphorylated RNA, leading to a more labile monophosphorylated state that can stimulate subsequent ribonuclease cleavage. The chain is RNA pyrophosphohydrolase from Acinetobacter baylyi (strain ATCC 33305 / BD413 / ADP1).